Here is a 196-residue protein sequence, read N- to C-terminus: MAEGSAVLRGSSNHKVTLVTGNDGKRREVQACLEGHVLVENVKLDLPEIQSDSVFEISRNKALTAYDIIKSPVLVEDTALCFDALGGLPGPYVKWFFERIGPTGLIKLLEGFDTRRAYATCVFTYCASPDVVLQFEGRCDGRIVEVPRGEGGFGWDSVFEPDEGCGQTYAEMQDEEKNRISPRAKALVALKAHFCL.

20–25 (TGNDGK) contacts ITP. Glu-48 provides a ligand contact to Mg(2+). ITP contacts are provided by residues Lys-61, 77–78 (DT), Lys-94, 153–156 (FGWD), Lys-177, and 182–183 (PR).

Belongs to the HAM1 NTPase family. In terms of assembly, homodimer. It depends on Mg(2+) as a cofactor. Mn(2+) is required as a cofactor.

The protein localises to the cytoplasm. The catalysed reaction is ITP + H2O = IMP + diphosphate + H(+). It catalyses the reaction dITP + H2O = dIMP + diphosphate + H(+). It carries out the reaction XTP + H2O = XMP + diphosphate + H(+). In terms of biological role, pyrophosphatase that hydrolyzes non-canonical purine nucleotides such as inosine triphosphate (ITP), deoxyinosine triphosphate (dITP) or xanthosine 5'-triphosphate (XTP) to their respective monophosphate derivatives. The enzyme does not distinguish between the deoxy- and ribose forms. Probably excludes non-canonical purines from RNA and DNA precursor pools, thus preventing their incorporation into RNA and DNA and avoiding chromosomal lesions. The protein is Inosine triphosphate pyrophosphatase 2 of Trypanosoma cruzi (strain CL Brener).